A 177-amino-acid chain; its full sequence is Insertion element IS1223 uncharacterized 20.7 kDa protein (177 aa).

The disordered stretch occupies residues 112-131 (KQKGRPRKVPKKSKKTTKKL). The segment covering 113–128 (QKGRPRKVPKKSKKTT) has biased composition (basic residues).

This sequence belongs to the IS150/IS1296 orfA family.

This is Insertion element IS1223 uncharacterized 20.7 kDa protein from Lactobacillus johnsonii.